The following is a 317-amino-acid chain: L-lactate dehydrogenase (317 aa).

NAD(+)-binding positions include Val18, Asp39, Lys44, Tyr69, and 83-84 (GA). Substrate contacts are provided by residues Gln86, Arg92, and 124 to 127 (NPVD). NAD(+)-binding positions include 122–124 (VTN) and Ser147. A substrate-binding site is contributed by 152-155 (DTAR). Beta-D-fructose 1,6-bisphosphate-binding residues include Arg157 and His172. The Proton acceptor role is filled by His179. Position 225 is a phosphotyrosine (Tyr225). Position 234 (Thr234) interacts with substrate.

It belongs to the LDH/MDH superfamily. LDH family. In terms of assembly, homotetramer.

The protein localises to the cytoplasm. It catalyses the reaction (S)-lactate + NAD(+) = pyruvate + NADH + H(+). Its pathway is fermentation; pyruvate fermentation to lactate; (S)-lactate from pyruvate: step 1/1. Allosterically activated by fructose 1,6-bisphosphate (FBP). Its function is as follows. Catalyzes the conversion of lactate to pyruvate. This chain is L-lactate dehydrogenase, found in Acetivibrio thermocellus (strain ATCC 27405 / DSM 1237 / JCM 9322 / NBRC 103400 / NCIMB 10682 / NRRL B-4536 / VPI 7372) (Clostridium thermocellum).